Consider the following 77-residue polypeptide: Putative Fis-like DNA-binding protein (77 aa).

The segment at residues 53 to 72 (QSLAADYLGINRNTLRKKLQ) is a DNA-binding region (H-T-H motif).

Belongs to the transcriptional regulatory Fis family.

The polypeptide is Putative Fis-like DNA-binding protein (Ralstonia nicotianae (strain ATCC BAA-1114 / GMI1000) (Ralstonia solanacearum)).